Consider the following 115-residue polypeptide: U3-lycotoxin-Ls1o (115 aa).

The first 20 residues, 1–20 (MKFVLLFGVLLVTLFSYSSA), serve as a signal peptide directing secretion. Positions 21-44 (EMLDDFDQADEDELLSLIEKEEAR) are excised as a propeptide. 4 disulfide bridges follow: Cys48–Cys63, Cys55–Cys72, Cys62–Cys87, and Cys74–Cys85.

It belongs to the neurotoxin 19 (CSTX) family. 01 subfamily. In terms of tissue distribution, expressed by the venom gland.

Its subcellular location is the secreted. This chain is U3-lycotoxin-Ls1o, found in Lycosa singoriensis (Wolf spider).